The following is a 335-amino-acid chain: Nucleoid-associated protein YejK (335 aa).

The protein belongs to the YejK family.

Its subcellular location is the cytoplasm. The protein localises to the nucleoid. In Shigella flexneri, this protein is Nucleoid-associated protein YejK.